Consider the following 461-residue polypeptide: DNA polymerase delta subunit 3 (461 aa).

Disordered regions lie at residues 148-229 (VAQA…SAKG), 249-380 (VPGQ…KRVL), and 399-461 (YESE…CQKK). Polar residues predominate over residues 155–172 (ARSSSQTPSDTSAVSTPP). A compositionally biased stretch (basic and acidic residues) spans 205–214 (DANKEPKAKE). A compositionally biased stretch (low complexity) spans 215–228 (APSVSAASSKPSAK). The segment covering 279–304 (KPGRKTEPAKIQQKDKKSKMKRMDKS) has biased composition (basic and acidic residues). The span at 371-380 (GKKRKRKRVL) shows a compositional bias: basic residues. Basic and acidic residues predominate over residues 427-436 (VKKEPKEERK). The PIP-box signature appears at 451 to 458 (QISIMGFC).

As to quaternary structure, component of both the DNA polymerase delta and DNA polymerase zeta complexes. The tetrameric DNA polymerase delta complex (Pol-delta4), which consists of POLD1/p125, POLD2/p50, POLD3/p66/p68 and POLD4/p12, with POLD1 bearing DNA polymerase and 3' to 5' proofreading exonuclease activities.

It localises to the cytoplasm. The protein resides in the nucleus. In terms of biological role, accessory component of both the DNA polymerase delta complex and the DNA polymerase zeta complex. As a component of the trimeric and tetrameric DNA polymerase delta complexes (Pol-delta3 and Pol-delta4, respectively), plays a role in high fidelity genome replication, including in lagging strand synthesis, and repair. Required for optimal Pol-delta activity. Stabilizes the Pol-delta complex and plays a major role in Pol-delta stimulation by PCNA. Pol-delta3 and Pol-delta4 are characterized by the absence or the presence of POLD4. They exhibit differences in catalytic activity. Most notably, Pol-delta3 shows higher proofreading activity than Pol-delta4. Although both Pol-delta3 and Pol-delta4 process Okazaki fragments in vitro, Pol-delta3 may also be better suited to fulfill this task, exhibiting near-absence of strand displacement activity compared to Pol-delta4 and stalling on encounter with the 5'-blocking oligonucleotides. Pol-delta3 idling process may avoid the formation of a gap, while maintaining a nick that can be readily ligated. Along with DNA polymerase kappa, DNA polymerase delta carries out approximately half of nucleotide excision repair (NER) synthesis following UV irradiation. In this context, POLD3, along with PCNA and RFC1-replication factor C complex, is required to recruit POLD1, the catalytic subunit of the polymerase delta complex, to DNA damage sites. Under conditions of DNA replication stress, required for the repair of broken replication forks through break-induced replication (BIR). Involved in the translesion synthesis (TLS) of templates carrying O6-methylguanine or abasic sites performed by Pol-delta4, independently of DNA polymerase zeta (REV3L) or eta (POLH). Facilitates abasic site bypass by DNA polymerase delta by promoting extension from the nucleotide inserted opposite the lesion. Also involved in TLS, as a component of the tetrameric DNA polymerase zeta complex. Along with POLD2, dramatically increases the efficiency and processivity of DNA synthesis of the DNA polymerase zeta complex compared to the minimal zeta complex, consisting of only REV3L and REV7. This is DNA polymerase delta subunit 3 (POLD3) from Gallus gallus (Chicken).